The sequence spans 436 residues: Xylose isomerase (436 aa).

Residues His-100 and Asp-103 contribute to the active site. Mg(2+)-binding residues include Glu-231, Glu-267, His-270, Asp-295, Asp-306, Asp-308, and Asp-338.

Belongs to the xylose isomerase family. Homotetramer. The cofactor is Mg(2+).

The protein localises to the cytoplasm. It catalyses the reaction alpha-D-xylose = alpha-D-xylulofuranose. This is Xylose isomerase from Agrobacterium fabrum (strain C58 / ATCC 33970) (Agrobacterium tumefaciens (strain C58)).